The following is a 126-amino-acid chain: Glycerol dehydrogenase small subunit (126 aa).

The next 4 helical transmembrane spans lie at 13 to 33 (WLTLLLGVIVLLVGLFFVIGG), 41 to 61 (GSTYYVLCGILLVASGVFMLM), 67 to 87 (AFLYLGALAYTWVWSFWEVGF), and 92 to 112 (LLPRAFGPTILGILVALTIPV).

The protein resides in the cell membrane. It carries out the reaction glycerol + A = dihydroxyacetone + AH2. Catalyzes the oxidation of glycerol to glycerone. Also acts, more slowly, on a number of other polyols including D-sorbitol, D-arabinitol, D-mannitol, meso-erythritol, adonitol and propylene glycol. This chain is Glycerol dehydrogenase small subunit (sldB), found in Gluconobacter thailandicus.